Here is a 314-residue protein sequence, read N- to C-terminus: 4-hydroxy-3-methylbut-2-enyl diphosphate reductase (314 aa).

Position 12 (cysteine 12) interacts with [4Fe-4S] cluster. Residues histidine 41 and histidine 74 each coordinate (2E)-4-hydroxy-3-methylbut-2-enyl diphosphate. Residues histidine 41 and histidine 74 each contribute to the dimethylallyl diphosphate site. Isopentenyl diphosphate is bound by residues histidine 41 and histidine 74. Position 96 (cysteine 96) interacts with [4Fe-4S] cluster. Position 124 (histidine 124) interacts with (2E)-4-hydroxy-3-methylbut-2-enyl diphosphate. Histidine 124 contributes to the dimethylallyl diphosphate binding site. Histidine 124 lines the isopentenyl diphosphate pocket. Residue glutamate 126 is the Proton donor of the active site. Threonine 167 contributes to the (2E)-4-hydroxy-3-methylbut-2-enyl diphosphate binding site. Cysteine 197 provides a ligand contact to [4Fe-4S] cluster. (2E)-4-hydroxy-3-methylbut-2-enyl diphosphate is bound by residues serine 225, serine 226, asparagine 227, and serine 269. Serine 225, serine 226, asparagine 227, and serine 269 together coordinate dimethylallyl diphosphate. Residues serine 225, serine 226, asparagine 227, and serine 269 each contribute to the isopentenyl diphosphate site.

This sequence belongs to the IspH family. [4Fe-4S] cluster is required as a cofactor.

The catalysed reaction is isopentenyl diphosphate + 2 oxidized [2Fe-2S]-[ferredoxin] + H2O = (2E)-4-hydroxy-3-methylbut-2-enyl diphosphate + 2 reduced [2Fe-2S]-[ferredoxin] + 2 H(+). The enzyme catalyses dimethylallyl diphosphate + 2 oxidized [2Fe-2S]-[ferredoxin] + H2O = (2E)-4-hydroxy-3-methylbut-2-enyl diphosphate + 2 reduced [2Fe-2S]-[ferredoxin] + 2 H(+). It functions in the pathway isoprenoid biosynthesis; dimethylallyl diphosphate biosynthesis; dimethylallyl diphosphate from (2E)-4-hydroxy-3-methylbutenyl diphosphate: step 1/1. The protein operates within isoprenoid biosynthesis; isopentenyl diphosphate biosynthesis via DXP pathway; isopentenyl diphosphate from 1-deoxy-D-xylulose 5-phosphate: step 6/6. Catalyzes the conversion of 1-hydroxy-2-methyl-2-(E)-butenyl 4-diphosphate (HMBPP) into a mixture of isopentenyl diphosphate (IPP) and dimethylallyl diphosphate (DMAPP). Acts in the terminal step of the DOXP/MEP pathway for isoprenoid precursor biosynthesis. In Pseudoalteromonas atlantica (strain T6c / ATCC BAA-1087), this protein is 4-hydroxy-3-methylbut-2-enyl diphosphate reductase.